Consider the following 211-residue polypeptide: Putative 3-methyladenine DNA glycosylase (211 aa).

Belongs to the DNA glycosylase MPG family.

This is Putative 3-methyladenine DNA glycosylase from Granulibacter bethesdensis (strain ATCC BAA-1260 / CGDNIH1).